Consider the following 112-residue polypeptide: UPF0060 membrane protein Mpe_A1656 (112 aa).

The next 4 membrane-spanning stretches (helical) occupy residues 9-29 (GLFFVTAVAEIVGCYLPWLVL), 34-54 (SAWLLVPAAASLAVFAWLLTL), 65-85 (AYGGVYVVVALLWLWRVDGVV), and 91-111 (LVGGAICLAGMAIIALQPRAA).

This sequence belongs to the UPF0060 family.

The protein resides in the cell inner membrane. The sequence is that of UPF0060 membrane protein Mpe_A1656 from Methylibium petroleiphilum (strain ATCC BAA-1232 / LMG 22953 / PM1).